The primary structure comprises 357 residues: Peptide chain release factor 1 (357 aa).

Gln236 bears the N5-methylglutamine mark.

This sequence belongs to the prokaryotic/mitochondrial release factor family. In terms of processing, methylated by PrmC. Methylation increases the termination efficiency of RF1.

It is found in the cytoplasm. Its function is as follows. Peptide chain release factor 1 directs the termination of translation in response to the peptide chain termination codons UAG and UAA. This is Peptide chain release factor 1 from Mycolicibacterium gilvum (strain PYR-GCK) (Mycobacterium gilvum (strain PYR-GCK)).